Reading from the N-terminus, the 497-residue chain is Cytochrome P450 2D6 (497 aa).

Asp301 is a substrate binding site. Residue Cys443 coordinates heme.

It belongs to the cytochrome P450 family. Requires heme as cofactor.

Its subcellular location is the endoplasmic reticulum membrane. It localises to the microsome membrane. The catalysed reaction is (5Z,8Z,11Z,14Z)-eicosatetraenoate + reduced [NADPH--hemoprotein reductase] + O2 = (8R,9S)-epoxy-(5Z,11Z,14Z)-eicosatrienoate + oxidized [NADPH--hemoprotein reductase] + H2O + H(+). It catalyses the reaction (5Z,8Z,11Z,14Z)-eicosatetraenoate + reduced [NADPH--hemoprotein reductase] + O2 = (11R,12S)-epoxy-(5Z,8Z,14Z)-eicosatrienoate + oxidized [NADPH--hemoprotein reductase] + H2O + H(+). The enzyme catalyses (5Z,8Z,11Z,14Z)-eicosatetraenoate + reduced [NADPH--hemoprotein reductase] + O2 = (14S,15R)-epoxy-(5Z,8Z,11Z)-eicosatrienoate + oxidized [NADPH--hemoprotein reductase] + H2O + H(+). It carries out the reaction N-(5Z,8Z,11Z,14Z-eicosatetraenoyl)-ethanolamine + reduced [NADPH--hemoprotein reductase] + O2 = N-(8,9-epoxy-5Z,11Z,14Z-eicosatrienoyl)-ethanolamine + oxidized [NADPH--hemoprotein reductase] + H2O + H(+). The catalysed reaction is N-(5Z,8Z,11Z,14Z-eicosatetraenoyl)-ethanolamine + reduced [NADPH--hemoprotein reductase] + O2 = N-(11,12-epoxy-5Z,8Z,14Z-eicosatrienoyl)-ethanolamine + oxidized [NADPH--hemoprotein reductase] + H2O + H(+). It catalyses the reaction N-(5Z,8Z,11Z,14Z-eicosatetraenoyl)-ethanolamine + reduced [NADPH--hemoprotein reductase] + O2 = N-(14,15-epoxy-5Z,8Z,11Z-eicosatrienoyl)-ethanolamine + oxidized [NADPH--hemoprotein reductase] + H2O + H(+). The enzyme catalyses N-(5Z,8Z,11Z,14Z-eicosatetraenoyl)-ethanolamine + reduced [NADPH--hemoprotein reductase] + O2 = N-(20-hydroxy-5Z,8Z,11Z,14Z-eicosatetraenoyl)-ethanolamine + oxidized [NADPH--hemoprotein reductase] + H2O + H(+). It carries out the reaction (5Z,8Z,11Z,14Z,17Z)-eicosapentaenoate + reduced [NADPH--hemoprotein reductase] + O2 = (17S,18R)-epoxy-(5Z,8Z,11Z,14Z)-eicosatetraenoate + oxidized [NADPH--hemoprotein reductase] + H2O + H(+). The catalysed reaction is (4Z,7Z,10Z,13Z,16Z,19Z)-docosahexaenoate + reduced [NADPH--hemoprotein reductase] + O2 = (19R,20S)-epoxy-(4Z,7Z,10Z,13Z,16Z)-docosapentaenoate + oxidized [NADPH--hemoprotein reductase] + H2O + H(+). It catalyses the reaction (4Z,7Z,10Z,13Z,16Z,19Z)-docosahexaenoate + reduced [NADPH--hemoprotein reductase] + O2 = (19S,20R)-epoxy-(4Z,7Z,10Z,13Z,16Z)-docosapentaenoate + oxidized [NADPH--hemoprotein reductase] + H2O + H(+). The enzyme catalyses cholesterol + reduced [NADPH--hemoprotein reductase] + O2 = 25-hydroxycholesterol + oxidized [NADPH--hemoprotein reductase] + H2O + H(+). It carries out the reaction all-trans-retinol + reduced [NADPH--hemoprotein reductase] + O2 = all-trans-retinal + oxidized [NADPH--hemoprotein reductase] + 2 H2O + H(+). Its pathway is cofactor metabolism; retinol metabolism. It functions in the pathway lipid metabolism; fatty acid metabolism. The protein operates within steroid metabolism; cholesterol metabolism. A cytochrome P450 monooxygenase involved in the metabolism of fatty acids, steroids and retinoids. Mechanistically, uses molecular oxygen inserting one oxygen atom into a substrate, and reducing the second into a water molecule, with two electrons provided by NADPH via cytochrome P450 reductase (NADPH--hemoprotein reductase). Catalyzes the epoxidation of double bonds of polyunsaturated fatty acids (PUFA). Metabolizes endocannabinoid arachidonoylethanolamide (anandamide) to 20-hydroxyeicosatetraenoic acid ethanolamide (20-HETE-EA) and 8,9-, 11,12-, and 14,15-epoxyeicosatrienoic acid ethanolamides (EpETrE-EAs), potentially modulating endocannabinoid system signaling. Catalyzes the hydroxylation of carbon-hydrogen bonds. Metabolizes cholesterol toward 25-hydroxycholesterol, a physiological regulator of cellular cholesterol homeostasis. Catalyzes the oxidative transformations of all-trans retinol to all-trans retinal, a precursor for the active form all-trans-retinoic acid. Also involved in the oxidative metabolism of drugs such as antiarrhythmics, adrenoceptor antagonists, and tricyclic antidepressants. The chain is Cytochrome P450 2D6 (CYP2D6) from Pan paniscus (Pygmy chimpanzee).